The sequence spans 107 residues: Somatoliberin (107 aa).

The N-terminal stretch at 1–19 is a signal peptide; sequence MPLWVFFVILTLTNGSHCS. The propeptide occupies 20–30; the sequence is PSPSLPFRIRR. Leu-74 is modified (leucine amide). The propeptide occupies 77-107; the sequence is QVDSMWADHRQMSLESLLAALLQKHSRDSQG.

Belongs to the glucagon family.

It is found in the secreted. Functionally, GRF is released by the hypothalamus and acts on the adenohypophyse to stimulate the secretion of growth hormone. This Mesocricetus auratus (Golden hamster) protein is Somatoliberin (GHRH).